A 215-amino-acid chain; its full sequence is Orotate phosphoribosyltransferase (215 aa).

K26 lines the 5-phospho-alpha-D-ribose 1-diphosphate pocket. Residue 34 to 35 (FF) participates in orotate binding. 5-phospho-alpha-D-ribose 1-diphosphate contacts are provided by residues 72 to 73 (YK), R99, K100, K103, H105, and 124 to 132 (DDVITAGTA). Residues T128 and R156 each contribute to the orotate site.

The protein belongs to the purine/pyrimidine phosphoribosyltransferase family. PyrE subfamily. In terms of assembly, homodimer. It depends on Mg(2+) as a cofactor.

It carries out the reaction orotidine 5'-phosphate + diphosphate = orotate + 5-phospho-alpha-D-ribose 1-diphosphate. It functions in the pathway pyrimidine metabolism; UMP biosynthesis via de novo pathway; UMP from orotate: step 1/2. Functionally, catalyzes the transfer of a ribosyl phosphate group from 5-phosphoribose 1-diphosphate to orotate, leading to the formation of orotidine monophosphate (OMP). This Cellvibrio japonicus (strain Ueda107) (Pseudomonas fluorescens subsp. cellulosa) protein is Orotate phosphoribosyltransferase.